The sequence spans 549 residues: MSKSQIESTWSSLLQELEIIWKEVGETETEREKILIEIEEECREVYNRKIEKVKEEKIRIKQEIADSEARVIDICSVMEEPPILGRHHQSDQQSGNGRSLKDELVKILQKLEEMEKRKSERKIQFIQVIDDIRCVREEINGESDDETCSSDFSADESDLSLRKLEELHRELYTLQEQKRNRVKQIQDNIRTLESLCSVLGLNFRETVTKIHPSLVDTEGSRSISNETLDKLASSVQQWHETKIQRMQELQDLVTTMLEFWNLMDTPAEEQQKFMDVSCNIAATVSEITKPNSLSIDLLEEVKAELCRLEELKWSKMKELVLKKRSELEEICRRTHIVLEEEDIAVENVIKAIESGDVNPENILEQIEYRAGKVKEEALSRKEILEKADKWLNACEEENWLEEYNQDENRYNAGKGSHLILKRAEKARALVNKLPAMVEALASKITIWESEKEYEFLFDGNRLLSMLEEYTELREEKEQERRRKRDLKKHQGQVTSEQDKGSVTKPQSAKKGLKVSTNKRFVSSPHTPQTDSPHSAKSNQSFSTPLSRHG.

3 coiled-coil regions span residues 36–123 (IEIE…ERKI), 160–199 (SLRKLEELHRELYTLQEQKRNRVKQIQDNIRTLESLCSVL), and 459–492 (GNRLLSMLEEYTELREEKEQERRRKRDLKKHQGQ). The tract at residues 474-549 (EEKEQERRRK…SFSTPLSRHG (76 aa)) is disordered. Over residues 481–490 (RRKRDLKKHQ) the composition is skewed to basic residues. Phosphoserine is present on residues Ser-501 and Ser-546. Over residues 514 to 549 (VSTNKRFVSSPHTPQTDSPHSAKSNQSFSTPLSRHG) the composition is skewed to polar residues.

It belongs to the MAP65/ASE1 family. As to quaternary structure, forms dimer. Binds to microtubules (MT).

Its subcellular location is the nucleus. It is found in the cytoplasm. The protein resides in the cytoskeleton. It localises to the spindle pole. In Arabidopsis thaliana (Mouse-ear cress), this protein is 65-kDa microtubule-associated protein 9 (MAP65-9).